The primary structure comprises 171 residues: Lipoprotein signal peptidase (171 aa).

A run of 4 helical transmembrane segments spans residues 15-35 (WLWL…IVMD), 47-67 (VLPF…SFLS), 72-92 (WQRW…AYWM), and 107-127 (ALII…GFVV). Catalysis depends on residues D128 and D146. The helical transmembrane segment at 141 to 161 (AFNLADSTICIGAAMIILDGF) threads the bilayer.

Belongs to the peptidase A8 family.

It localises to the cell inner membrane. The catalysed reaction is Release of signal peptides from bacterial membrane prolipoproteins. Hydrolyzes -Xaa-Yaa-Zaa-|-(S,diacylglyceryl)Cys-, in which Xaa is hydrophobic (preferably Leu), and Yaa (Ala or Ser) and Zaa (Gly or Ala) have small, neutral side chains.. It functions in the pathway protein modification; lipoprotein biosynthesis (signal peptide cleavage). This protein specifically catalyzes the removal of signal peptides from prolipoproteins. The chain is Lipoprotein signal peptidase from Vibrio cholerae serotype O1 (strain ATCC 39315 / El Tor Inaba N16961).